The chain runs to 698 residues: PWWP domain-containing DNA repair factor 3A (698 aa).

2 disordered regions span residues 102–145 (TSLS…EDDQ) and 159–386 (CSPK…EEPP). At S105 the chain carries Phosphoserine. Positions 129–139 (SQVSSAPSPSF) are enriched in polar residues. A phosphoserine mark is found at S165, S168, and S170. The span at 200–211 (DESQNGSGSQLD) shows a compositional bias: polar residues. Composition is skewed to basic and acidic residues over residues 212–235 (HGQE…RGKA) and 341–350 (RAGDSDRPEE). A phosphoserine mark is found at S355 and S356. Over residues 370–384 (EEEEEEEEEEEEEEE) the composition is skewed to acidic residues. The region spanning 399-460 (VGMLVWLKYQ…KHFDCKEKHA (62 aa)) is the PWWP domain.

This sequence belongs to the PWWP3A family. In terms of assembly, interacts with TP53BP1 (via BRCT domain); the interaction is not dependent on its phosphorylation status. Binds nucleosomes. Interacts with trimethylated 'Lys-36' of histone H3 (H3K36me3) (in vitro).

It is found in the nucleus. Involved in the DNA damage response pathway by contributing to the maintenance of chromatin architecture. Recruited to the vicinity of DNA breaks by TP53BP1 and plays an accessory role to facilitate damage-induced chromatin changes and promoting chromatin relaxation. Required for efficient DNA repair and cell survival following DNA damage. The chain is PWWP domain-containing DNA repair factor 3A from Rattus norvegicus (Rat).